We begin with the raw amino-acid sequence, 379 residues long: Ascochitine biosynthesis cluster protein 8 (379 aa).

The next 3 helical transmembrane spans lie at 87–107, 116–136, and 141–161; these read ELIA…LDLE, VGPV…VAAC, and IKVF…VVAL.

Its subcellular location is the membrane. Its pathway is mycotoxin biosynthesis. In terms of biological role, part of the gene cluster that mediates the biosynthesis of the selective antifungal agent ascochitine, an o-quinone methide that plays a possible protective role against other microbial competitors in nature and is considered to be important for pathogenicity of legume-associated Didymella species. The pathway probably begins with the synthesis of a keto-aldehyde intermediate by the ascochitine non-reducing polyketide synthase pksAC from successive condensations of 4 malonyl-CoA units, presumably with a simple acetyl-CoA starter unit. Release of the keto-aldehyde intermediate is consistent with the presence of the C-terminal reductive release domain. The HR-PKS (orf7) probably makes a diketide starter unit which is passed to the non-reducing polyketide synthase pksAC for further extension, producing ascochital and ascochitine. The aldehyde dehydrogenase (orf1), the 2-oxoglutarate-dependent dioxygenase (orf3) and the dehydrogenase (orf9) are probably involved in subsequent oxidations of methyl groups to the carboxylic acid of the heterocyclic ring. The ascochitine gene cluster also includes a gene encoding a short peptide with a cupin domain (orf2) that is often found in secondary metabolite gene clusters and which function has still to be determined. In Didymella fabae (Leaf and pod spot disease fungus), this protein is Ascochitine biosynthesis cluster protein 8.